Here is a 239-residue protein sequence, read N- to C-terminus: Probable 2-phosphosulfolactate phosphatase (239 aa).

The protein belongs to the ComB family. The cofactor is Mg(2+).

It catalyses the reaction (2R)-O-phospho-3-sulfolactate + H2O = (2R)-3-sulfolactate + phosphate. The chain is Probable 2-phosphosulfolactate phosphatase from Clostridium botulinum (strain Kyoto / Type A2).